Consider the following 423-residue polypeptide: Glucose-1-phosphate adenylyltransferase (423 aa).

Residues Y107, G172, 187–188, and S205 contribute to the alpha-D-glucose 1-phosphate site; that span reads EK.

The protein belongs to the bacterial/plant glucose-1-phosphate adenylyltransferase family. As to quaternary structure, homotetramer.

The catalysed reaction is alpha-D-glucose 1-phosphate + ATP + H(+) = ADP-alpha-D-glucose + diphosphate. Its pathway is glycan biosynthesis; glycogen biosynthesis. In terms of biological role, involved in the biosynthesis of ADP-glucose, a building block required for the elongation reactions to produce glycogen. Catalyzes the reaction between ATP and alpha-D-glucose 1-phosphate (G1P) to produce pyrophosphate and ADP-Glc. The polypeptide is Glucose-1-phosphate adenylyltransferase (Cereibacter sphaeroides (strain ATCC 17029 / ATH 2.4.9) (Rhodobacter sphaeroides)).